A 138-amino-acid chain; its full sequence is Ribosome-binding factor A (138 aa).

A disordered region spans residues 117–138 (AEDGQHQEGPASADAKPESTEE).

The protein belongs to the RbfA family. In terms of assembly, monomer. Binds 30S ribosomal subunits, but not 50S ribosomal subunits or 70S ribosomes.

The protein localises to the cytoplasm. Functionally, one of several proteins that assist in the late maturation steps of the functional core of the 30S ribosomal subunit. Associates with free 30S ribosomal subunits (but not with 30S subunits that are part of 70S ribosomes or polysomes). Required for efficient processing of 16S rRNA. May interact with the 5'-terminal helix region of 16S rRNA. The sequence is that of Ribosome-binding factor A from Pseudomonas syringae pv. syringae (strain B728a).